We begin with the raw amino-acid sequence, 88 residues long: Small ribosomal subunit protein uS15c (88 aa).

The protein belongs to the universal ribosomal protein uS15 family. Part of the 30S ribosomal subunit.

Its subcellular location is the plastid. It is found in the chloroplast. The polypeptide is Small ribosomal subunit protein uS15c (rps15) (Nasturtium officinale (Watercress)).